The sequence spans 355 residues: S-adenosylmethionine:tRNA ribosyltransferase-isomerase (355 aa).

The protein belongs to the QueA family. As to quaternary structure, monomer.

It is found in the cytoplasm. The enzyme catalyses 7-aminomethyl-7-carbaguanosine(34) in tRNA + S-adenosyl-L-methionine = epoxyqueuosine(34) in tRNA + adenine + L-methionine + 2 H(+). It functions in the pathway tRNA modification; tRNA-queuosine biosynthesis. In terms of biological role, transfers and isomerizes the ribose moiety from AdoMet to the 7-aminomethyl group of 7-deazaguanine (preQ1-tRNA) to give epoxyqueuosine (oQ-tRNA). The polypeptide is S-adenosylmethionine:tRNA ribosyltransferase-isomerase (Burkholderia lata (strain ATCC 17760 / DSM 23089 / LMG 22485 / NCIMB 9086 / R18194 / 383)).